We begin with the raw amino-acid sequence, 151 residues long: UPF0179 protein MJ1627 (151 aa).

Belongs to the UPF0179 family.

The protein is UPF0179 protein MJ1627 of Methanocaldococcus jannaschii (strain ATCC 43067 / DSM 2661 / JAL-1 / JCM 10045 / NBRC 100440) (Methanococcus jannaschii).